The sequence spans 397 residues: Myb family transcription factor PHL4 (397 aa).

Residues M1–N27 are disordered. Residues A228–Y288 enclose the HTH myb-type domain. The H-T-H motif DNA-binding region spans P259–R284. The segment at T319–L339 is coiled coil. The LHEQLE motif lies at L332–E337. The interval K359–E397 is disordered. Over residues E386 to E397 the composition is skewed to basic and acidic residues. S387 carries the post-translational modification Phosphoserine.

The protein belongs to the MYB-CC family.

The protein resides in the nucleus. Transcription factor involved in male gametophyte development. The chain is Myb family transcription factor PHL4 from Arabidopsis thaliana (Mouse-ear cress).